A 519-amino-acid polypeptide reads, in one-letter code: uncharacterized protein (519 aa).

Helical transmembrane passes span 141 to 161 (GSSL…ANVF), 202 to 222 (LGET…WALA), 385 to 405 (FVVR…PFVG), and 433 to 453 (TVVP…AELV).

The protein localises to the cell membrane. This is an uncharacterized protein from Sinorhizobium fredii (strain NBRC 101917 / NGR234).